The chain runs to 239 residues: Probable 2-phosphosulfolactate phosphatase (239 aa).

The protein belongs to the ComB family. The cofactor is Mg(2+).

The catalysed reaction is (2R)-O-phospho-3-sulfolactate + H2O = (2R)-3-sulfolactate + phosphate. The protein is Probable 2-phosphosulfolactate phosphatase of Clostridium botulinum (strain Kyoto / Type A2).